The chain runs to 258 residues: Kallikrein-1 (258 aa).

A signal peptide spans 1-18; the sequence is MWFLVLCLALSLGGTGAA. Residues 19 to 24 constitute a propeptide, activation peptide; sequence PPIQSR. Positions 25-255 constitute a Peptidase S1 domain; sequence IVGGWECSQP…YVKWIEDTIA (231 aa). Intrachain disulfides connect Cys31–Cys170, Cys47–Cys63, Cys149–Cys216, Cys181–Cys195, and Cys206–Cys231. His62 (charge relay system) is an active-site residue. Ser90 carries an O-linked (GalNAc...) serine glycan. Asn99 is a glycosylation site (N-linked (GlcNAc...) asparagine). O-linked (GalNAc...) serine glycosylation is present at Ser101. N-linked (GlcNAc...) asparagine glycosylation is present at Asn105. Asp117 functions as the Charge relay system in the catalytic mechanism. N-linked (GlcNAc...) asparagine glycosylation is present at Asn161. Ser163 is a glycosylation site (O-linked (GalNAc...) serine). The Charge relay system role is filled by Ser210.

The protein belongs to the peptidase S1 family. Kallikrein subfamily.

The enzyme catalyses Preferential cleavage of Arg-|-Xaa bonds in small molecule substrates. Highly selective action to release kallidin (lysyl-bradykinin) from kininogen involves hydrolysis of Met-|-Xaa or Leu-|-Xaa.. Glandular kallikreins cleave Met-Lys and Arg-Ser bonds in kininogen to release Lys-bradykinin. This Papio hamadryas (Hamadryas baboon) protein is Kallikrein-1 (KLK1).